A 503-amino-acid polypeptide reads, in one-letter code: 4-trimethylaminobutyraldehyde dehydrogenase (503 aa).

Residues Lys189 and Gly241–Thr245 each bind NAD(+). Glu263 (proton acceptor) is an active-site residue. Residue Cys297 is the Nucleophile of the active site. Glu400 provides a ligand contact to NAD(+).

It belongs to the aldehyde dehydrogenase family. In terms of assembly, homotetramer.

It localises to the cytoplasm. Its subcellular location is the cytosol. The catalysed reaction is 4-(trimethylamino)butanal + NAD(+) + H2O = 4-(trimethylamino)butanoate + NADH + 2 H(+). It catalyses the reaction an aldehyde + NAD(+) + H2O = a carboxylate + NADH + 2 H(+). The protein operates within amine and polyamine biosynthesis; carnitine biosynthesis. Its function is as follows. Converts gamma-trimethylaminobutyraldehyde into gamma-butyrobetaine with high efficiency (in vitro). Can catalyze the irreversible oxidation of a broad range of aldehydes to the corresponding acids in an NAD-dependent reaction, but with low efficiency. The chain is 4-trimethylaminobutyraldehyde dehydrogenase (aldh9A1) from Gadus morhua subsp. callarias (Baltic cod).